The primary structure comprises 345 residues: MGKPGFSPRGGGGGGGGGGGGFRGRGGGGGGGGGGGFGGGRGRGGGGDRGGRGGFGGGRGGGGRGGGGGGGRGGFGGRGGGGGRGGGGRGGGGRGGGGRGGGAGGFKGGKTVTIEPHRHEGVFIARGKEDALVTRNFVPGSEVYGEKRISVENNGEKIEYRVWNPFRSKLAAAVLGGVEQIHMPPGSKVLYLGAASGTTVSHVSDVVGPEGLVYAVEFSHRSGRDLINVAKKRTNIIPIIEDARHPHKYRMLVGMVDTIFADVAQPDQGRIVALNAQHFLKNGGHFVISIKASCIDSTAQPEAVFASEVKKMQADKLKPQEQLTLEPYERDHAVVVGVYRPPPKQ.

Positions 1–114 are disordered; the sequence is MGKPGFSPRG…GFKGGKTVTI (114 aa). Gly residues predominate over residues 8 to 108; sequence PRGGGGGGGG…RGGGAGGFKG (101 aa). Asymmetric dimethylarginine is present on residues arginine 9, arginine 23, arginine 25, arginine 41, arginine 43, arginine 49, arginine 52, arginine 59, arginine 64, arginine 72, arginine 78, arginine 84, arginine 89, arginine 94, and arginine 99. S-adenosyl-L-methionine-binding positions include 198 to 199, 217 to 218, 242 to 243, and 262 to 265; these read TT, EF, DA, and DVAQ.

It belongs to the methyltransferase superfamily. Fibrillarin family. Component of box C/D small nucleolar ribonucleoprotein (snoRNP) particles. It is associated with the U3, U8 and U13 small nuclear RNAs. Post-translationally, by homology to other fibrillarins, some or all of the N-terminal domain arginines are modified to asymmetric dimethylarginine (DMA).

It localises to the nucleus. The protein localises to the nucleolus. It catalyses the reaction L-glutaminyl-[histone H2A] + S-adenosyl-L-methionine = N(5)-methyl-L-glutaminyl-[histone H2A] + S-adenosyl-L-homocysteine + H(+). Functionally, S-adenosyl-L-methionine-dependent methyltransferase that has the ability to methylate both RNAs and proteins. Involved in pre-rRNA processing. Utilizes the methyl donor S-adenosyl-L-methionine to catalyze the site-specific 2'-hydroxyl methylation of ribose moieties in pre-ribosomal RNA. Site specificity is provided by a guide RNA that base pairs with the substrate. Methylation occurs at a characteristic distance from the sequence involved in base pairing with the guide RNA. Also acts as a protein methyltransferase by mediating methylation of 'Gln-105' of histone H2A (H2AQ105me), a modification that impairs binding of the FACT complex and is specifically present at 35S ribosomal DNA locus. The polypeptide is rRNA 2'-O-methyltransferase fibrillarin (Drosophila erecta (Fruit fly)).